The primary structure comprises 819 residues: MSLSSAFRTVTNDPGIITWRIEKMELVLVPLSAHGNFYEGDCYIILSTRRVGSLLSQNIHFWIGKDSSQDEQSCAAIYTTQLDDYLGGSPVQHREVQYHESDTFRGYFKRGIIYKKGGVASGMKHVETNTYDVKRLLHVKGKRNIRATEVEMSWDSFNQGDVFLLDLGMVIIQWNGPESNSGERLKAMLLAKDIRDRERGGRAEIGVIEGDKEAASPELMTVLQNTLGRRSIIKPAVPDEVTDQQQKSTIMLYHVSDTTGQLSVTEVATRPLVQELLNHDDCYILDQSGTKIYVWKGKGATKVEKQAAMSKALDFIKMKGYPSSTNVETVNDGAESAMFKQLFQKWSVKDQTTGLGKTFSIGKIAKIFQDKFDVTLLHTKPEVAAQERMVDDGNGKVEVWRIENLELVPVEYQWHGFFYGGDCYLVLYTYDVNGKPCYILYIWQGRHASQDELAASAYQAVEVDQQFGGAPVQVRVSMGKEPRHFMAIFKGKLVIYEGGTSRKGNVEPDPPVRLFQIHGNDKSNTKAVEVSASASSLNSNDVFLLWTQAEHYLWYGKGSSGDERAMAKELAELLCDGDADTVAEGQEPPEFWDLLGGKAPYANDKRLQQETLDIQVRLFECSNKTGRFLVTEVTDFTQDDLSPGDVMLLDTWDQVFLWIGAEANATEKEGALSTAQEYLVTHPSGRDPDTPILIIKQGFEPPTFTGWFLAWDPHIWSEGKSYEQLKNELGDATAIVRITTDMKNATLSLNSSESGPKYYPVEVLLKSQDQELPEDVDPTKKENYLSERDFVSVFGITRGQFVSLPGWKQLQLKKEAGLF.

The tract at residues 1–731 (MSLSSAFRTV…YEQLKNELGD (731 aa)) is core. One copy of the Gelsolin-like 1 repeat lies at 24–105 (MELVLVPLSA…VQYHESDTFR (82 aa)). Tyr-85 is subject to Phosphotyrosine. A 1,2-diacyl-sn-glycero-3-phospho-(1D-myo-inositol-4,5-bisphosphate)-binding positions include 109 to 116 (KRGIIYKK) and 135 to 143 (RLLHVKGKR). 5 Gelsolin-like repeats span residues 144-215 (NIRA…KEAA), 265-339 (TEVA…SAMF), 407-486 (LVPV…RHFM), 524-592 (NTKA…PEFW), and 631-704 (TEVT…PPTF). The segment at 628–819 (FLVTEVTDFT…LQLKKEAGLF (192 aa)) is required for interaction with F-actin. Positions 731 to 819 (DATAIVRITT…LQLKKEAGLF (89 aa)) are headpiece. The 67-residue stretch at 753-819 (ESGPKYYPVE…LQLKKEAGLF (67 aa)) folds into the HP domain. Tyr-758 is subject to Phosphotyrosine.

The protein belongs to the villin/gelsolin family. In terms of assembly, associates (via C-terminus) with actin. Interacts with F-actin. Interacts with SCARF1; the interaction occurs in embryonic dorsal root ganglions at 18 dpc and induces neurite-like outgrowth. Interacts with PLCE1. Interacts with ACTR2 and ACTR3; associates with the ARP2/3 complex. Expressed in dorsal root ganglion (DRG) neurons and superior cervical ganglia (SCG). Expressed in podocytes.

It is found in the cytoplasm. Its subcellular location is the cytoskeleton. The protein resides in the cell projection. It localises to the neuron projection. The protein localises to the axon. It is found in the lamellipodium. Its subcellular location is the cell junction. The protein resides in the focal adhesion. Ca(2+)-regulated actin-binding protein which plays an important role in actin bundling. May have a unique function in the morphogenesis of neuronal cells which form ganglia. Required for SREC1-mediated regulation of neurite-like outgrowth. Plays a role in regenerative sensory axon outgrowth and remodeling processes after peripheral injury in neonates. Involved in the formation of long fine actin-containing filopodia-like structures in fibroblast. Plays a role in ciliogenesis. In podocytes, controls lamellipodia formation through the regulation of EGF-induced diacylglycerol generation by PLCE1 and ARP2/3 complex assembly. This chain is Advillin, found in Rattus norvegicus (Rat).